A 608-amino-acid polypeptide reads, in one-letter code: DNA mismatch repair protein MutL (608 aa).

Belongs to the DNA mismatch repair MutL/HexB family.

Functionally, this protein is involved in the repair of mismatches in DNA. It is required for dam-dependent methyl-directed DNA mismatch repair. May act as a 'molecular matchmaker', a protein that promotes the formation of a stable complex between two or more DNA-binding proteins in an ATP-dependent manner without itself being part of a final effector complex. This chain is DNA mismatch repair protein MutL, found in Anoxybacillus flavithermus (strain DSM 21510 / WK1).